The chain runs to 227 residues: Transmembrane emp24 domain-containing protein 1 (227 aa).

An N-terminal signal peptide occupies residues 1 to 23; sequence MMAAGAALALALWLLMPPVEVGG. Over 24–194 the chain is Extracellular; it reads AGPPPIQDGE…LQEGNLERVN (171 aa). The region spanning 43 to 125 is the GOLD domain; the sequence is KQCFYQSAPA…EKLVFFELIF (83 aa). Residues 145–170 adopt a coiled-coil conformation; it reads EMLDVKMEDIKESIETMRTRLERSIQ. A helical transmembrane segment spans residues 195 to 215; it reads FWSAVNVAVLLLVAVLQVCTL. The Cytoplasmic portion of the chain corresponds to 216 to 227; that stretch reads KRFFQDKRPVPT. The short motif at 218–219 is the COPII vesicle coat-binding element; sequence FF. The short motif at 218–227 is the COPI vesicle coat-binding element; that stretch reads FFQDKRPVPT.

Belongs to the EMP24/GP25L family. Homodimer in endoplasmic reticulum, endoplasmic reticulum-Golgi intermediate compartment and cis-Golgi network. Interacts with IL1RL1. Interacts with RNF26; this interaction is important to modulate innate immune signaling through the cGAS-STING pathway. In terms of tissue distribution, widely expressed.

The protein resides in the cell membrane. It is found in the endoplasmic reticulum membrane. The protein localises to the golgi apparatus. It localises to the cis-Golgi network membrane. Its subcellular location is the endoplasmic reticulum-Golgi intermediate compartment membrane. Potential role in vesicular protein trafficking, mainly in the early secretory pathway. May act as a cargo receptor at the lumenal side for incorporation of secretory cargo molecules into transport vesicles and may be involved in vesicle coat formation at the cytoplasmic side. Plays a positive role in IL-33-mediated IL-8 and IL-6 production by interacting with interleukin-33 receptor IL1RL1. Also plays a role in the modulation of innate immune signaling through the cGAS-STING pathway by interacting with RNF26. The polypeptide is Transmembrane emp24 domain-containing protein 1 (TMED1) (Homo sapiens (Human)).